The primary structure comprises 420 residues: Tyrosine--tRNA ligase (420 aa).

Tyr-39 serves as a coordination point for L-tyrosine. The 'HIGH' region motif lies at 44 to 53 (CTAPSLHIGS). Positions 176 and 180 each coordinate L-tyrosine. Positions 236 to 240 (KMGKT) match the 'KMSKS' region motif. Residue Lys-239 coordinates ATP. Residues 349-414 (IPLIDLLYDT…AGKKRHIKIL (66 aa)) enclose the S4 RNA-binding domain.

This sequence belongs to the class-I aminoacyl-tRNA synthetase family. TyrS type 1 subfamily. Homodimer.

It localises to the cytoplasm. The catalysed reaction is tRNA(Tyr) + L-tyrosine + ATP = L-tyrosyl-tRNA(Tyr) + AMP + diphosphate + H(+). Its function is as follows. Catalyzes the attachment of tyrosine to tRNA(Tyr) in a two-step reaction: tyrosine is first activated by ATP to form Tyr-AMP and then transferred to the acceptor end of tRNA(Tyr). In Wolbachia pipientis subsp. Culex pipiens (strain wPip), this protein is Tyrosine--tRNA ligase.